A 221-amino-acid chain; its full sequence is Enolase-phosphatase E1 (221 aa).

Residues Asp9 and Glu11 each coordinate Mg(2+). Substrate contacts are provided by residues 116–117 (SS) and Lys152. A Mg(2+)-binding site is contributed by Asp180.

Belongs to the HAD-like hydrolase superfamily. MasA/MtnC family. In terms of assembly, monomer. Mg(2+) serves as cofactor.

Its subcellular location is the cytoplasm. It is found in the nucleus. It catalyses the reaction 5-methylsulfanyl-2,3-dioxopentyl phosphate + H2O = 1,2-dihydroxy-5-(methylsulfanyl)pent-1-en-3-one + phosphate. It functions in the pathway amino-acid biosynthesis; L-methionine biosynthesis via salvage pathway; L-methionine from S-methyl-5-thio-alpha-D-ribose 1-phosphate: step 3/6. The protein operates within amino-acid biosynthesis; L-methionine biosynthesis via salvage pathway; L-methionine from S-methyl-5-thio-alpha-D-ribose 1-phosphate: step 4/6. Bifunctional enzyme that catalyzes the enolization of 2,3-diketo-5-methylthiopentyl-1-phosphate (DK-MTP-1-P) into the intermediate 2-hydroxy-3-keto-5-methylthiopentenyl-1-phosphate (HK-MTPenyl-1-P), which is then dephosphorylated to form the acireductone 1,2-dihydroxy-3-keto-5-methylthiopentene (DHK-MTPene). In Kluyveromyces lactis (strain ATCC 8585 / CBS 2359 / DSM 70799 / NBRC 1267 / NRRL Y-1140 / WM37) (Yeast), this protein is Enolase-phosphatase E1.